A 987-amino-acid chain; its full sequence is Ephrin type-B receptor 4a (987 aa).

The signal sequence occupies residues 1–24 (MELFSRNVAAFWIILLEFLLGSVA). Residues 25 to 548 (EEEVLMNTKT…DSSSPLLVTG (524 aa)) are Extracellular-facing. The Eph LBD domain occupies 26-205 (EEVLMNTKTE…FFKKCPALTR (180 aa)). Cystine bridges form between cysteine 70–cysteine 187 and cysteine 104–cysteine 114. The interval 319–340 (DSADTPCTRPPSSPRSPVPQVN) is disordered. Over residues 326-335 (TRPPSSPRSP) the composition is skewed to pro residues. 2 Fibronectin type-III domains span residues 328 to 438 (PPSS…TSPN) and 442 to 536 (LVSG…TLPD). A helical transmembrane segment spans residues 549 to 569 (ILIAMGMLLLIIVIGAAIYCI). Topologically, residues 570-987 (RKQNNYKDPE…QNKAPGNVLY (418 aa)) are cytoplasmic. One can recognise a Protein kinase domain in the interval 621-884 (VKIEEVIGAG…NIVSALDKLI (264 aa)). ATP-binding positions include 627 to 635 (IGAGEFGEV) and lysine 653. Aspartate 746 acts as the Proton acceptor in catalysis. An SAM domain is found at 914–978 (SSCGTVGDWL…LSSIEALGIQ (65 aa)).

It belongs to the protein kinase superfamily. Tyr protein kinase family. Ephrin receptor subfamily.

Its subcellular location is the cell membrane. The enzyme catalyses L-tyrosyl-[protein] + ATP = O-phospho-L-tyrosyl-[protein] + ADP + H(+). Its function is as follows. Receptor tyrosine kinase which binds promiscuously transmembrane ephrin-B family ligands residing on adjacent cells, leading to contact-dependent bidirectional signaling into neighboring cells. The signaling pathway downstream of the receptor is referred to as forward signaling while the signaling pathway downstream of the ephrin ligand is referred to as reverse signaling. Together with its cognate ligand/functional ligand EFNB2 is involved in the regulation of cell adhesion and cell migration, and plays a central role in heart morphogenesis, angiogenesis and blood vessel remodeling and permeability. EPHB4-mediated forward signaling controls cellular repulsion and segregation from EFNB2-expressing cells. Involved in somitogenesis. The chain is Ephrin type-B receptor 4a from Danio rerio (Zebrafish).